A 170-amino-acid polypeptide reads, in one-letter code: Peptide deformylase (170 aa).

The Fe cation site is built by C94 and H136. The active site involves E137. H140 contributes to the Fe cation binding site.

Belongs to the polypeptide deformylase family. Fe(2+) serves as cofactor.

It carries out the reaction N-terminal N-formyl-L-methionyl-[peptide] + H2O = N-terminal L-methionyl-[peptide] + formate. Its function is as follows. Removes the formyl group from the N-terminal Met of newly synthesized proteins. Requires at least a dipeptide for an efficient rate of reaction. N-terminal L-methionine is a prerequisite for activity but the enzyme has broad specificity at other positions. The chain is Peptide deformylase from Stenotrophomonas maltophilia (strain K279a).